A 388-amino-acid chain; its full sequence is Chitinase 4 (388 aa).

In terms of domain architecture, GH18 spans 22–375 (FKTCVYFSNW…KNFVDQLGGV (354 aa)). Residues Asn30 and Asn82 are each glycosylated (N-linked (GlcNAc...) asparagine). Chitin is bound by residues 82-83 (NQ) and 109-112 (GGWG). 2 N-linked (GlcNAc...) asparagine glycosylation sites follow: Asn123 and Asn132. The active-site Proton donor is the Glu151. Tyr152 contributes to the chitin binding site. An N-linked (GlcNAc...) asparagine glycan is attached at Asn155. 208–211 (MCYD) lines the chitin pocket. A glycan (N-linked (GlcNAc...) asparagine) is linked at Asn237. Trp350 serves as a coordination point for chitin.

It belongs to the glycosyl hydrolase 18 family. Chitinase class V subfamily.

The protein localises to the secreted. It carries out the reaction Random endo-hydrolysis of N-acetyl-beta-D-glucosaminide (1-&gt;4)-beta-linkages in chitin and chitodextrins.. Chitinase involved in the remodeling of chitin in the fungal cell wall. Plays a role in sporulation. This chain is Chitinase 4 (CHT4), found in Candida albicans (strain SC5314 / ATCC MYA-2876) (Yeast).